The chain runs to 189 residues: Resolvase (189 aa).

Positions 1 to 139 constitute a Resolvase/invertase-type recombinase catalytic domain; it reads MLVGYARVST…EGLKSAKARG (139 aa). Ser9 functions as the O-(5'-phospho-DNA)-serine intermediate in the catalytic mechanism. The disordered stretch occupies residues 130–151; the sequence is EGLKSAKARGRNGGRPSKRNDK. The H-T-H motif DNA-binding region spans 165-184; the sequence is IVDIVKQTGLSRATVYRVLN.

The protein belongs to the site-specific recombinase resolvase family.

Its function is as follows. A likely role for the res protein would be to stabilize pIP404 by reducing the number of plasmid multimers resulting from homologous recombination. This chain is Resolvase (res), found in Clostridium perfringens.